The primary structure comprises 253 residues: 3-deoxy-manno-octulosonate cytidylyltransferase (253 aa).

It belongs to the KdsB family.

The protein localises to the cytoplasm. The catalysed reaction is 3-deoxy-alpha-D-manno-oct-2-ulosonate + CTP = CMP-3-deoxy-beta-D-manno-octulosonate + diphosphate. The protein operates within nucleotide-sugar biosynthesis; CMP-3-deoxy-D-manno-octulosonate biosynthesis; CMP-3-deoxy-D-manno-octulosonate from 3-deoxy-D-manno-octulosonate and CTP: step 1/1. Its pathway is bacterial outer membrane biogenesis; lipopolysaccharide biosynthesis. Activates KDO (a required 8-carbon sugar) for incorporation into bacterial lipopolysaccharide in Gram-negative bacteria. The sequence is that of 3-deoxy-manno-octulosonate cytidylyltransferase from Neisseria meningitidis serogroup A / serotype 4A (strain DSM 15465 / Z2491).